A 203-amino-acid chain; its full sequence is Octanoyltransferase (203 aa).

One can recognise a BPL/LPL catalytic domain in the interval 32–203; that stretch reads ISTPDEIWLV…LMHKIREIFS (172 aa). Residues 71-78, 138-140, and 151-153 contribute to the substrate site; these read RGGKITYH, SLG, and GMA. The Acyl-thioester intermediate role is filled by cysteine 169.

This sequence belongs to the LipB family.

The protein localises to the cytoplasm. It carries out the reaction octanoyl-[ACP] + L-lysyl-[protein] = N(6)-octanoyl-L-lysyl-[protein] + holo-[ACP] + H(+). It functions in the pathway protein modification; protein lipoylation via endogenous pathway; protein N(6)-(lipoyl)lysine from octanoyl-[acyl-carrier-protein]: step 1/2. Catalyzes the transfer of endogenously produced octanoic acid from octanoyl-acyl-carrier-protein onto the lipoyl domains of lipoate-dependent enzymes. Lipoyl-ACP can also act as a substrate although octanoyl-ACP is likely to be the physiological substrate. In Buchnera aphidicola subsp. Baizongia pistaciae (strain Bp), this protein is Octanoyltransferase.